The chain runs to 263 residues: tRNA pseudouridine synthase A (263 aa).

The active-site Nucleophile is the Asp-51. Tyr-109 serves as a coordination point for substrate.

It belongs to the tRNA pseudouridine synthase TruA family. As to quaternary structure, homodimer.

It carries out the reaction uridine(38/39/40) in tRNA = pseudouridine(38/39/40) in tRNA. Functionally, formation of pseudouridine at positions 38, 39 and 40 in the anticodon stem and loop of transfer RNAs. This is tRNA pseudouridine synthase A from Mannheimia succiniciproducens (strain KCTC 0769BP / MBEL55E).